The primary structure comprises 426 residues: Serine hydroxymethyltransferase (426 aa).

Residues leucine 113 and 117–119 (GHL) contribute to the (6S)-5,6,7,8-tetrahydrofolate site. The residue at position 222 (lysine 222) is an N6-(pyridoxal phosphate)lysine. Residue 363–365 (SAF) coordinates (6S)-5,6,7,8-tetrahydrofolate.

Belongs to the SHMT family. In terms of assembly, homodimer. The cofactor is pyridoxal 5'-phosphate.

The protein resides in the cytoplasm. It carries out the reaction (6R)-5,10-methylene-5,6,7,8-tetrahydrofolate + glycine + H2O = (6S)-5,6,7,8-tetrahydrofolate + L-serine. Its pathway is one-carbon metabolism; tetrahydrofolate interconversion. It functions in the pathway amino-acid biosynthesis; glycine biosynthesis; glycine from L-serine: step 1/1. In terms of biological role, catalyzes the reversible interconversion of serine and glycine with tetrahydrofolate (THF) serving as the one-carbon carrier. This reaction serves as the major source of one-carbon groups required for the biosynthesis of purines, thymidylate, methionine, and other important biomolecules. Also exhibits THF-independent aldolase activity toward beta-hydroxyamino acids, producing glycine and aldehydes, via a retro-aldol mechanism. The chain is Serine hydroxymethyltransferase from Phocaeicola vulgatus (strain ATCC 8482 / DSM 1447 / JCM 5826 / CCUG 4940 / NBRC 14291 / NCTC 11154) (Bacteroides vulgatus).